Reading from the N-terminus, the 325-residue chain is Transcription initiation factor IIB (325 aa).

The TFIIB-type zinc finger occupies 19-52 (NKLWCMVCRIQDPDIIEDYAKGDLICRGCGVVVG). Residues Cys-23, Cys-26, Cys-44, and Cys-47 each coordinate Zn(2+). 2 repeat units span residues 131-207 (MADH…IMKE) and 227-303 (FCST…DLYA).

This sequence belongs to the TFIIB family.

The protein localises to the nucleus. In terms of biological role, general transcription factor that plays a role in transcription initiation by RNA polymerase II (Pol II). Involved in the pre-initiation complex (PIC) formation and Pol II recruitment at promoter DNA. The protein is Transcription initiation factor IIB (gtf2b) of Dictyostelium discoideum (Social amoeba).